A 206-amino-acid polypeptide reads, in one-letter code: Small ribosomal subunit protein uS4c (206 aa).

Composition is skewed to basic residues over residues 1–13 and 25–34; these read MSRY…RITR and QSKKKGRPGQ. A disordered region spans residues 1–50; that stretch reads MSRYRGPKLRITRRLGALPGLTQKQSKKKGRPGQHGKSNEADNSKKTTEY. Residues 37–50 show a composition bias toward basic and acidic residues; it reads KSNEADNSKKTTEY. Positions 95 to 157 constitute an S4 RNA-binding domain; the sequence is MRLDTICFTL…ATSKNLVEGN (63 aa).

The protein belongs to the universal ribosomal protein uS4 family. Part of the 30S ribosomal subunit. Contacts protein S5. The interaction surface between S4 and S5 is involved in control of translational fidelity.

The protein localises to the plastid. It is found in the chloroplast. One of the primary rRNA binding proteins, it binds directly to 16S rRNA where it nucleates assembly of the body of the 30S subunit. Its function is as follows. With S5 and S12 plays an important role in translational accuracy. The protein is Small ribosomal subunit protein uS4c (rps4) of Trieres chinensis (Marine centric diatom).